The primary structure comprises 1056 residues: Carbamoyl phosphate synthase large chain (1056 aa).

Residues 1-398 form a carboxyphosphate synthetic domain region; the sequence is MPRDPSIKKV…AFLKALRSLD (398 aa). Positions 127, 167, 173, 174, 206, 208, 213, 239, 240, 241, 282, and 295 each coordinate ATP. The 194-residue stretch at 131–324 folds into the ATP-grasp 1 domain; that stretch reads RDLMNRIGEP…IARVASKIAI (194 aa). Residues glutamine 282, glutamate 295, and asparagine 297 each contribute to the Mg(2+) site. Positions 282, 295, and 297 each coordinate Mn(2+). The oligomerization domain stretch occupies residues 399 to 532; sequence TDVEHHTVLS…STYGDKVCEV (134 aa). Positions 533-921 are carbamoyl phosphate synthetic domain; that stretch reads THSDRKKVMI…YKASIAAHNR (389 aa). Residues 663-854 form the ATP-grasp 2 domain; sequence SVLLDSLSIP…LAKIAARVMM (192 aa). Positions 699, 738, 740, 745, 770, 771, 772, 773, 813, and 825 each coordinate ATP. 3 residues coordinate Mg(2+): glutamine 813, glutamate 825, and asparagine 827. Mn(2+) is bound by residues glutamine 813, glutamate 825, and asparagine 827. One can recognise an MGS-like domain in the interval 920-1056; sequence NRLPKSGNVF…IEPLQHYIGR (137 aa). Residues 922–1056 form an allosteric domain region; sequence LPKSGNVFIS…IEPLQHYIGR (135 aa).

This sequence belongs to the CarB family. In terms of assembly, composed of two chains; the small (or glutamine) chain promotes the hydrolysis of glutamine to ammonia, which is used by the large (or ammonia) chain to synthesize carbamoyl phosphate. Tetramer of heterodimers (alpha,beta)4. It depends on Mg(2+) as a cofactor. Mn(2+) is required as a cofactor.

It carries out the reaction hydrogencarbonate + L-glutamine + 2 ATP + H2O = carbamoyl phosphate + L-glutamate + 2 ADP + phosphate + 2 H(+). The enzyme catalyses hydrogencarbonate + NH4(+) + 2 ATP = carbamoyl phosphate + 2 ADP + phosphate + 2 H(+). It participates in amino-acid biosynthesis; L-arginine biosynthesis; carbamoyl phosphate from bicarbonate: step 1/1. Its pathway is pyrimidine metabolism; UMP biosynthesis via de novo pathway; (S)-dihydroorotate from bicarbonate: step 1/3. Large subunit of the glutamine-dependent carbamoyl phosphate synthetase (CPSase). CPSase catalyzes the formation of carbamoyl phosphate from the ammonia moiety of glutamine, carbonate, and phosphate donated by ATP, constituting the first step of 2 biosynthetic pathways, one leading to arginine and/or urea and the other to pyrimidine nucleotides. The large subunit (synthetase) binds the substrates ammonia (free or transferred from glutamine from the small subunit), hydrogencarbonate and ATP and carries out an ATP-coupled ligase reaction, activating hydrogencarbonate by forming carboxy phosphate which reacts with ammonia to form carbamoyl phosphate. This is Carbamoyl phosphate synthase large chain from Methanospirillum hungatei JF-1 (strain ATCC 27890 / DSM 864 / NBRC 100397 / JF-1).